A 288-amino-acid chain; its full sequence is UTP--glucose-1-phosphate uridylyltransferase (288 aa).

This sequence belongs to the UDPGP type 2 family.

It catalyses the reaction alpha-D-glucose 1-phosphate + UTP + H(+) = UDP-alpha-D-glucose + diphosphate. The protein operates within glycolipid metabolism; diglucosyl-diacylglycerol biosynthesis. Functionally, catalyzes the formation of UDP-glucose from glucose-1-phosphate and UTP. This is an intermediate step in the biosynthesis of diglucosyl-diacylglycerol (Glc2-DAG), i.e. the predominant glycolipid found in the S.aureus membrane, which is also used as a membrane anchor for lipoteichoic acid (LTA). The sequence is that of UTP--glucose-1-phosphate uridylyltransferase (gtaB) from Staphylococcus aureus (strain MRSA252).